The sequence spans 475 residues: Ankyrin repeat, SAM and basic leucine zipper domain-containing protein 1 (475 aa).

Residues 1–23 (MAAARFRGLAVAGGGESSESEDD) form a disordered region. Ser17, Ser18, and Ser20 each carry phosphoserine. ANK repeat units lie at residues 45 to 74 (EKNE…SVDS), 78 to 107 (YGWT…KASF), 110 to 144 (DKQT…DPNV), 148 to 177 (RLMT…EVNT), 181 to 210 (NGYT…NKML), and 214 to 243 (DGKT…PLEG). In terms of domain architecture, SAM spans 272-334 (SYTAFGDLEI…KILAALKELE (63 aa)).

In terms of assembly, interacts with DDX4, PIWIL1, RANBP9 and TDRD1.

The protein localises to the cytoplasm. Its function is as follows. Plays a central role during spermatogenesis by repressing transposable elements and preventing their mobilization, which is essential for the germline integrity. Acts via the piRNA metabolic process, which mediates the repression of transposable elements during meiosis by forming complexes composed of piRNAs and Piwi proteins and governs the methylation and subsequent repression of transposons. Its association with pi-bodies suggests a participation in the primary piRNAs metabolic process. Required prior to the pachytene stage to facilitate the production of multiple types of piRNAs, including those associated with repeats involved in the regulation of retrotransposons. May act by mediating protein-protein interactions during germ cell maturation. The protein is Ankyrin repeat, SAM and basic leucine zipper domain-containing protein 1 (ASZ1) of Equus caballus (Horse).